A 282-amino-acid chain; its full sequence is Large ribosomal subunit protein uL4c (282 aa).

The N-terminal 49 residues, 1–49 (MASSATAPNSLSFFSSSLFLSSSHQIPKTYISVSKLGSGRVSKPLSVSS), are a transit peptide targeting the chloroplast. The interval 106–138 (EVRGGGIKPYSQKKTGHARRGSQRTPLRPGGGV) is disordered.

This sequence belongs to the universal ribosomal protein uL4 family. As to quaternary structure, part of the 50S ribosomal subunit.

It localises to the plastid. Its subcellular location is the chloroplast. Its function is as follows. This protein binds directly and specifically to 23S rRNA. May play a role in plastid transcriptional regulation. In Arabidopsis thaliana (Mouse-ear cress), this protein is Large ribosomal subunit protein uL4c (RPL4).